The chain runs to 950 residues: Serine/threonine-protein kinase atg1 (950 aa).

The region spanning 6-311 is the Protein kinase domain; it reads YTRLDEIGRG…FPDFFENGVI (306 aa). ATP contacts are provided by residues 12–20 and K35; that span reads IGRGSFATV. The active-site Proton acceptor is D149. Disordered stretches follow at residues 314-425, 443-467, 505-570, 671-690, and 926-950; these read PIPG…HATA, RQRGRNTFSEGSPQTDRQADKLREE, QGGI…QSPT, VQTDPSSKGNLAGERENPDS, and PTPSANVPSKMAPLNPVSVGATPPK. 3 stretches are compositionally biased toward polar residues: residues 370–389, 447–458, and 511–520; these read GLTQRPPSQNQRFGTPPTTT, RNTFSEGSPQTD, and GAQTGALSRR. Positions 549–565 are enriched in basic and acidic residues; that stretch reads SRADSMHNRQSSYERRY.

It belongs to the protein kinase superfamily. Ser/Thr protein kinase family. APG1/unc-51/ULK1 subfamily. In terms of assembly, homodimer. Forms a ternary complex with ATG13 and ATG17.

It localises to the cytoplasm. The protein localises to the preautophagosomal structure membrane. The catalysed reaction is L-seryl-[protein] + ATP = O-phospho-L-seryl-[protein] + ADP + H(+). It carries out the reaction L-threonyl-[protein] + ATP = O-phospho-L-threonyl-[protein] + ADP + H(+). In terms of biological role, serine/threonine protein kinase involved in the cytoplasm to vacuole transport (Cvt) and found to be essential in autophagy, where it is required for the formation of autophagosomes. Involved in the clearance of protein aggregates which cannot be efficiently cleared by the proteasome. Required for selective autophagic degradation of the nucleus (nucleophagy) as well as for mitophagy which contributes to regulate mitochondrial quantity and quality by eliminating the mitochondria to a basal level to fulfill cellular energy requirements and preventing excess ROS production. Also involved in endoplasmic reticulum-specific autophagic process, in selective removal of ER-associated degradation (ERAD) substrates. Plays a key role in ATG9 and ATG23 cycling through the pre-autophagosomal structure and is necessary to promote ATG18 binding to ATG9 through phosphorylation of ATG9. Catalyzes phosphorylation of ATG4, decreasing the interaction between ATG4 and ATG8 and impairing deconjugation of PE-conjugated forms of ATG8. This chain is Serine/threonine-protein kinase atg1, found in Neosartorya fischeri (strain ATCC 1020 / DSM 3700 / CBS 544.65 / FGSC A1164 / JCM 1740 / NRRL 181 / WB 181) (Aspergillus fischerianus).